Here is a 500-residue protein sequence, read N- to C-terminus: Glycerol kinase (500 aa).

Threonine 12 contacts ADP. Positions 12, 13, and 14 each coordinate ATP. Sn-glycerol 3-phosphate is bound at residue threonine 12. Arginine 16 is an ADP binding site. Residues arginine 82, glutamate 83, tyrosine 134, and aspartate 244 each coordinate sn-glycerol 3-phosphate. Residues arginine 82, glutamate 83, tyrosine 134, aspartate 244, and glutamine 245 each contribute to the glycerol site. ADP contacts are provided by threonine 266 and glycine 309. Threonine 266, glycine 309, glutamine 313, and glycine 410 together coordinate ATP. ADP-binding residues include glycine 410 and asparagine 414.

It belongs to the FGGY kinase family. In terms of assembly, homotetramer and homodimer (in equilibrium).

The enzyme catalyses glycerol + ATP = sn-glycerol 3-phosphate + ADP + H(+). Its pathway is polyol metabolism; glycerol degradation via glycerol kinase pathway; sn-glycerol 3-phosphate from glycerol: step 1/1. Its activity is regulated as follows. Activated by phosphorylation and inhibited by fructose 1,6-bisphosphate (FBP). Key enzyme in the regulation of glycerol uptake and metabolism. Catalyzes the phosphorylation of glycerol to yield sn-glycerol 3-phosphate. This chain is Glycerol kinase, found in Alkaliphilus metalliredigens (strain QYMF).